Consider the following 456-residue polypeptide: Trigger factor (456 aa).

The region spanning 192 to 277 (GDTVVIDFVG…IHEVKTKEVP (86 aa)) is the PPIase FKBP-type domain.

Belongs to the FKBP-type PPIase family. Tig subfamily.

It localises to the cytoplasm. The catalysed reaction is [protein]-peptidylproline (omega=180) = [protein]-peptidylproline (omega=0). Functionally, involved in protein export. Acts as a chaperone by maintaining the newly synthesized protein in an open conformation. Functions as a peptidyl-prolyl cis-trans isomerase. The protein is Trigger factor of Streptococcus pyogenes serotype M2 (strain MGAS10270).